Here is a 400-residue protein sequence, read N- to C-terminus: Tryptophan synthase beta chain (400 aa).

Residue Lys-92 is modified to N6-(pyridoxal phosphate)lysine.

Belongs to the TrpB family. As to quaternary structure, tetramer of two alpha and two beta chains. Requires pyridoxal 5'-phosphate as cofactor.

The enzyme catalyses (1S,2R)-1-C-(indol-3-yl)glycerol 3-phosphate + L-serine = D-glyceraldehyde 3-phosphate + L-tryptophan + H2O. Its pathway is amino-acid biosynthesis; L-tryptophan biosynthesis; L-tryptophan from chorismate: step 5/5. In terms of biological role, the beta subunit is responsible for the synthesis of L-tryptophan from indole and L-serine. This is Tryptophan synthase beta chain from Neisseria meningitidis serogroup B (strain ATCC BAA-335 / MC58).